The following is an 84-amino-acid chain: Small ribosomal subunit protein uS17 (84 aa).

Belongs to the universal ribosomal protein uS17 family. As to quaternary structure, part of the 30S ribosomal subunit.

In terms of biological role, one of the primary rRNA binding proteins, it binds specifically to the 5'-end of 16S ribosomal RNA. The protein is Small ribosomal subunit protein uS17 of Proteus mirabilis (strain HI4320).